We begin with the raw amino-acid sequence, 172 residues long: Phosphopantetheine adenylyltransferase (172 aa).

A substrate-binding site is contributed by S9. ATP contacts are provided by residues 9-10 (SF) and H17. Substrate-binding residues include K41, L78, and R92. Residues 93-95 (GLR), E103, and 128-134 (GRAITST) contribute to the ATP site.

The protein belongs to the bacterial CoaD family. Homohexamer. Requires Mg(2+) as cofactor.

It is found in the cytoplasm. The catalysed reaction is (R)-4'-phosphopantetheine + ATP + H(+) = 3'-dephospho-CoA + diphosphate. It participates in cofactor biosynthesis; coenzyme A biosynthesis; CoA from (R)-pantothenate: step 4/5. Functionally, reversibly transfers an adenylyl group from ATP to 4'-phosphopantetheine, yielding dephospho-CoA (dPCoA) and pyrophosphate. The chain is Phosphopantetheine adenylyltransferase from Bartonella quintana (strain Toulouse) (Rochalimaea quintana).